The following is a 96-amino-acid chain: Co-chaperonin GroES (96 aa).

Belongs to the GroES chaperonin family. In terms of assembly, heptamer of 7 subunits arranged in a ring. Interacts with the chaperonin GroEL.

Its subcellular location is the cytoplasm. Functionally, together with the chaperonin GroEL, plays an essential role in assisting protein folding. The GroEL-GroES system forms a nano-cage that allows encapsulation of the non-native substrate proteins and provides a physical environment optimized to promote and accelerate protein folding. GroES binds to the apical surface of the GroEL ring, thereby capping the opening of the GroEL channel. The protein is Co-chaperonin GroES of Trichlorobacter lovleyi (strain ATCC BAA-1151 / DSM 17278 / SZ) (Geobacter lovleyi).